Here is a 237-residue protein sequence, read N- to C-terminus: 2-C-methyl-D-erythritol 4-phosphate cytidylyltransferase (237 aa).

It belongs to the IspD/TarI cytidylyltransferase family. IspD subfamily.

The enzyme catalyses 2-C-methyl-D-erythritol 4-phosphate + CTP + H(+) = 4-CDP-2-C-methyl-D-erythritol + diphosphate. Its pathway is isoprenoid biosynthesis; isopentenyl diphosphate biosynthesis via DXP pathway; isopentenyl diphosphate from 1-deoxy-D-xylulose 5-phosphate: step 2/6. In terms of biological role, catalyzes the formation of 4-diphosphocytidyl-2-C-methyl-D-erythritol from CTP and 2-C-methyl-D-erythritol 4-phosphate (MEP). The polypeptide is 2-C-methyl-D-erythritol 4-phosphate cytidylyltransferase (Vibrio vulnificus (strain YJ016)).